The sequence spans 114 residues: uncharacterized protein (114 aa).

It to E.coli YggL.

This is an uncharacterized protein from Haemophilus influenzae (strain ATCC 51907 / DSM 11121 / KW20 / Rd).